The following is a 144-amino-acid chain: Large ribosomal subunit protein uL16 (144 aa).

This sequence belongs to the universal ribosomal protein uL16 family. As to quaternary structure, part of the 50S ribosomal subunit.

In terms of biological role, binds 23S rRNA and is also seen to make contacts with the A and possibly P site tRNAs. This is Large ribosomal subunit protein uL16 from Halalkalibacterium halodurans (strain ATCC BAA-125 / DSM 18197 / FERM 7344 / JCM 9153 / C-125) (Bacillus halodurans).